Here is a 94-residue protein sequence, read N- to C-terminus: Pyrimidine/purine nucleoside phosphorylase (94 aa).

The protein belongs to the nucleoside phosphorylase PpnP family.

It carries out the reaction a purine D-ribonucleoside + phosphate = a purine nucleobase + alpha-D-ribose 1-phosphate. The catalysed reaction is adenosine + phosphate = alpha-D-ribose 1-phosphate + adenine. The enzyme catalyses cytidine + phosphate = cytosine + alpha-D-ribose 1-phosphate. It catalyses the reaction guanosine + phosphate = alpha-D-ribose 1-phosphate + guanine. It carries out the reaction inosine + phosphate = alpha-D-ribose 1-phosphate + hypoxanthine. The catalysed reaction is thymidine + phosphate = 2-deoxy-alpha-D-ribose 1-phosphate + thymine. The enzyme catalyses uridine + phosphate = alpha-D-ribose 1-phosphate + uracil. It catalyses the reaction xanthosine + phosphate = alpha-D-ribose 1-phosphate + xanthine. Functionally, catalyzes the phosphorolysis of diverse nucleosides, yielding D-ribose 1-phosphate and the respective free bases. Can use uridine, adenosine, guanosine, cytidine, thymidine, inosine and xanthosine as substrates. Also catalyzes the reverse reactions. The protein is Pyrimidine/purine nucleoside phosphorylase of Pseudomonas putida (strain ATCC 700007 / DSM 6899 / JCM 31910 / BCRC 17059 / LMG 24140 / F1).